Here is a 736-residue protein sequence, read N- to C-terminus: Orphan sodium- and chloride-dependent neurotransmitter transporter NTT5 (736 aa).

At 1 to 138 the chain is on the cytoplasmic side; it reads MKTEAQPSTS…FAYLWLNSGG (138 aa). 3 consecutive transmembrane segments (helical) span residues 139–159, 177–197, and 199–219; these read CSFA…LLFL, IIAP…FILG, and YFNV…QFPV. Over 220–263 the chain is Extracellular; the sequence is PWEKCPLTMNSSGFDPECERTTPSIYFWYQQALKASDRIEDGGS. An N-linked (GlcNAc...) asparagine glycan is attached at N229. Helical transmembrane passes span 264–284, 290–310, 338–358, and 383–403; these read PVYS…AFMI, TGKV…GFFI, VWSL…GSVA, and LTLL…ATVI. The Extracellular segment spans residues 404–495; the sequence is THRCCERNAE…EAMSFLPPSV (92 aa). Transmembrane regions (helical) follow at residues 496–516, 534–554, 568–588, 609–629, and 659–679; these read FWSF…AIGI, HTKL…LFFT, YWIV…VSWA, IFGW…FVTM, and ALLL…AYFV. Topologically, residues 680–736 are cytoplasmic; it reads YCRIHRIPFRPKSGDGPMTASTSLPLSHQLTPSKEVQKEEILQVDETKYPSTCNVTS.

The protein belongs to the sodium:neurotransmitter symporter (SNF) (TC 2.A.22) family. SLC6A16 subfamily. As to expression, highly expressed in peripheral tissues, particularly in testis, pancreas, and prostate.

The protein resides in the membrane. This chain is Orphan sodium- and chloride-dependent neurotransmitter transporter NTT5 (SLC6A16), found in Homo sapiens (Human).